Here is a 292-residue protein sequence, read N- to C-terminus: 33 kDa chaperonin (292 aa).

2 disulfide bridges follow: cysteine 238-cysteine 240 and cysteine 271-cysteine 274.

This sequence belongs to the HSP33 family. In terms of processing, under oxidizing conditions two disulfide bonds are formed involving the reactive cysteines. Under reducing conditions zinc is bound to the reactive cysteines and the protein is inactive.

The protein localises to the cytoplasm. Its function is as follows. Redox regulated molecular chaperone. Protects both thermally unfolding and oxidatively damaged proteins from irreversible aggregation. Plays an important role in the bacterial defense system toward oxidative stress. This Latilactobacillus sakei subsp. sakei (strain 23K) (Lactobacillus sakei subsp. sakei) protein is 33 kDa chaperonin.